The chain runs to 118 residues: Large ribosomal subunit protein bL19 (118 aa).

This sequence belongs to the bacterial ribosomal protein bL19 family.

Functionally, this protein is located at the 30S-50S ribosomal subunit interface and may play a role in the structure and function of the aminoacyl-tRNA binding site. The chain is Large ribosomal subunit protein bL19 from Helicobacter pylori (strain HPAG1).